Here is an 875-residue protein sequence, read N- to C-terminus: Probable serine/threonine-protein kinase samkC (875 aa).

A compositionally biased stretch (polar residues) spans 1-12 (METTTITSILDD). Residues 1–47 (METTTITSILDDNNNNNNNNNNNNNNNNNNNNNNNNNNNNNNNNNYN) form a disordered region. The segment covering 13–45 (NNNNNNNNNNNNNNNNNNNNNNNNNNNNNNNNN) has biased composition (low complexity). The 66-residue stretch at 51-116 (WDNEMVCKWL…SEFDDLKNIF (66 aa)) folds into the SAM domain. The stretch at 135–162 (DNNNLNNLNNNNNNNNNNNNNNNNNNNN) forms a coiled coil. Positions 136–168 (NNNLNNLNNNNNNNNNNNNNNNNNNNNNNNNNN) are enriched in low complexity. Positions 136 to 170 (NNNLNNLNNNNNNNNNNNNNNNNNNNNNNNNNNKT) are disordered. In terms of domain architecture, Protein kinase spans 181–452 (YVFIKQMKGS…SKQLLNFSWF (272 aa)). ATP contacts are provided by residues 187-195 (MKGSVNCSL) and K210. The Proton acceptor role is filled by D301. 2 disordered regions span residues 331-362 (NNNDDDNYDNHNHNHNHNHNHNHDNDNDNDTN) and 461-718 (SEPQ…NNNN). A compositionally biased stretch (low complexity) spans 474–554 (PQTSQSKPKP…KPKPSSSLSS (81 aa)). Residues 555–564 (EPPPLEPQPK) are compositionally biased toward pro residues. 3 stretches are compositionally biased toward low complexity: residues 565–581 (PQTSQSKPKPSSSLSSS), 589–611 (QPTQSSKPQPSQSKPQPIQSQPT), and 617–653 (QPKSSKQQPQSKQQQQQQQQQQQQQQQQQQQQQQQQK). The stretch at 626–655 (QSKQQQQQQQQQQQQQQQQQQQQQQQQKSK) forms a coiled coil. A compositionally biased stretch (basic and acidic residues) spans 654–663 (SKPEQSKSKP). Residues 664–718 (EQSQSKPQPGQPLQSPSKPQPIPSTTKTTTTTTTTTTPNNNNNNNNNNNNNNNNN) show a composition bias toward low complexity. Residues 842–862 (TLILYTFYYFLSNTLIYQIIL) form a helical membrane-spanning segment.

It belongs to the protein kinase superfamily. Ser/Thr protein kinase family.

The protein localises to the membrane. It catalyses the reaction L-seryl-[protein] + ATP = O-phospho-L-seryl-[protein] + ADP + H(+). The catalysed reaction is L-threonyl-[protein] + ATP = O-phospho-L-threonyl-[protein] + ADP + H(+). This Dictyostelium discoideum (Social amoeba) protein is Probable serine/threonine-protein kinase samkC (samkC).